The primary structure comprises 272 residues: Ribosomal RNA small subunit methyltransferase A (272 aa).

N18, L20, G45, E66, D91, and N113 together coordinate S-adenosyl-L-methionine.

This sequence belongs to the class I-like SAM-binding methyltransferase superfamily. rRNA adenine N(6)-methyltransferase family. RsmA subfamily.

The protein resides in the cytoplasm. It catalyses the reaction adenosine(1518)/adenosine(1519) in 16S rRNA + 4 S-adenosyl-L-methionine = N(6)-dimethyladenosine(1518)/N(6)-dimethyladenosine(1519) in 16S rRNA + 4 S-adenosyl-L-homocysteine + 4 H(+). Specifically dimethylates two adjacent adenosines (A1518 and A1519) in the loop of a conserved hairpin near the 3'-end of 16S rRNA in the 30S particle. May play a critical role in biogenesis of 30S subunits. This chain is Ribosomal RNA small subunit methyltransferase A, found in Pectobacterium atrosepticum (strain SCRI 1043 / ATCC BAA-672) (Erwinia carotovora subsp. atroseptica).